We begin with the raw amino-acid sequence, 562 residues long: Pyruvate kinase isozyme G, chloroplastic (562 aa).

A substrate-binding site is contributed by arginine 121. K(+) is bound by residues asparagine 123, serine 125, aspartate 156, and threonine 157. Asparagine 123–histidine 126 is a binding site for ATP. Glutamate 308 lines the Mg(2+) pocket. Substrate contacts are provided by glycine 331, aspartate 332, and threonine 364. A Mg(2+)-binding site is contributed by aspartate 332.

Belongs to the pyruvate kinase family. In terms of assembly, homotetramer. The cofactor is Mg(2+). It depends on K(+) as a cofactor. Highest levels in leaves. Also found in stems, roots and flowers.

It is found in the plastid. The protein localises to the chloroplast. The catalysed reaction is pyruvate + ATP = phosphoenolpyruvate + ADP + H(+). Its pathway is carbohydrate degradation; glycolysis; pyruvate from D-glyceraldehyde 3-phosphate: step 5/5. The protein is Pyruvate kinase isozyme G, chloroplastic of Nicotiana tabacum (Common tobacco).